Reading from the N-terminus, the 106-residue chain is Large ribosomal subunit protein uL24 (106 aa).

It belongs to the universal ribosomal protein uL24 family. Part of the 50S ribosomal subunit.

Functionally, one of two assembly initiator proteins, it binds directly to the 5'-end of the 23S rRNA, where it nucleates assembly of the 50S subunit. In terms of biological role, one of the proteins that surrounds the polypeptide exit tunnel on the outside of the subunit. This chain is Large ribosomal subunit protein uL24, found in Spiroplasma kunkelii.